The sequence spans 932 residues: Lon protease homolog 2, peroxisomal (932 aa).

The region spanning 11–259 (LALVPLPKGS…RVVELLARQV (249 aa)) is the Lon N-terminal domain. The interval 304 to 340 (TGLTPPGAAGGRNNEDEKETNEVDELQKRLQEAELSP) is disordered. The segment covering 328–340 (ELQKRLQEAELSP) has biased composition (basic and acidic residues). Residue 486 to 493 (GPPGTGKT) coordinates ATP. One can recognise a Lon proteolytic domain in the interval 729–916 (HGRPGVVTGL…WEAIRQVWPG (188 aa)). Catalysis depends on residues serine 822 and lysine 865. The Microbody targeting signal motif lies at 930–932 (SRL).

This sequence belongs to the peptidase S16 family.

Its subcellular location is the peroxisome matrix. It carries out the reaction Hydrolysis of proteins in presence of ATP.. Its function is as follows. ATP-dependent serine protease that mediates the selective degradation of misfolded and unassembled polypeptides in the peroxisomal matrix. Necessary for type 2 peroxisome targeting signal (PTS2)-containing protein processing and facilitates peroxisome matrix protein import. This is Lon protease homolog 2, peroxisomal from Aspergillus fumigatus (strain ATCC MYA-4609 / CBS 101355 / FGSC A1100 / Af293) (Neosartorya fumigata).